Consider the following 81-residue polypeptide: Putative truncated GMC-type inactive oxidoreductase R833 (81 aa).

Belongs to the GMC oxidoreductase family.

The polypeptide is Putative truncated GMC-type inactive oxidoreductase R833 (Acanthamoeba polyphaga mimivirus (APMV)).